The chain runs to 453 residues: uncharacterized protein (453 aa).

This sequence to B.subtilis YcdB.

This is an uncharacterized protein from Bacillus subtilis (strain 168).